Reading from the N-terminus, the 486-residue chain is Cardiolipin synthase A (486 aa).

The next 2 helical transmembrane spans lie at 3 to 23 (TFYT…IAGV) and 38 to 58 (MAWL…YLSF). PLD phosphodiesterase domains follow at residues 219 to 246 (MDLR…VDPR) and 399 to 426 (KDGL…DMRS). Residues H224, K226, D231, H404, K406, and D411 contribute to the active site.

This sequence belongs to the phospholipase D family. Cardiolipin synthase subfamily. ClsA sub-subfamily.

The protein localises to the cell inner membrane. It carries out the reaction 2 a 1,2-diacyl-sn-glycero-3-phospho-(1'-sn-glycerol) = a cardiolipin + glycerol. Its function is as follows. Catalyzes the reversible phosphatidyl group transfer from one phosphatidylglycerol molecule to another to form cardiolipin (CL) (diphosphatidylglycerol) and glycerol. This Pectobacterium atrosepticum (strain SCRI 1043 / ATCC BAA-672) (Erwinia carotovora subsp. atroseptica) protein is Cardiolipin synthase A.